Here is a 324-residue protein sequence, read N- to C-terminus: Zinc finger C2HC domain-containing protein 1A (324 aa).

The C2HC/C3H-type 1 zinc finger occupies 15 to 44; that stretch reads ELLPCKICGRTFFPVALKKHGPICKKTATK. 4 residues coordinate Zn(2+): Cys19, Cys22, His34, and Cys38. The tract at residues 43–83 is disordered; the sequence is TKKRKTFDSSRQRAEGTDIPTVKPLKPRPEPPKKPSNWRRK. Positions 48-58 are enriched in basic and acidic residues; sequence TFDSSRQRAEG. The C2HC/C3H-type 2 zinc-finger motif lies at 118–147; the sequence is DYIQCPYCQRRFNENAADRHINFCKEQAAR. Zn(2+)-binding residues include Cys122, Cys125, His137, and Cys141. 2 disordered regions span residues 150–224 and 236–259; these read NKGK…LSPS and NVKP…LTNK. 2 stretches are compositionally biased toward low complexity: residues 176–187 and 196–215; these read SNSPGTASSGSS and GKTV…SSLG. Ser222 is subject to Phosphoserine. Thr243 is modified (phosphothreonine). Ser291 is modified (phosphoserine).

Belongs to the ZC2HC1 family. Requires Zn(2+) as cofactor.

The polypeptide is Zinc finger C2HC domain-containing protein 1A (ZC2HC1A) (Pongo abelii (Sumatran orangutan)).